A 263-amino-acid chain; its full sequence is Hydroxyethylthiazole kinase 1 (263 aa).

A substrate-binding site is contributed by Met-42. ATP is bound by residues Lys-118 and Thr-164. Substrate is bound at residue Gly-191.

It belongs to the Thz kinase family. Requires Mg(2+) as cofactor.

The catalysed reaction is 5-(2-hydroxyethyl)-4-methylthiazole + ATP = 4-methyl-5-(2-phosphooxyethyl)-thiazole + ADP + H(+). Its pathway is cofactor biosynthesis; thiamine diphosphate biosynthesis; 4-methyl-5-(2-phosphoethyl)-thiazole from 5-(2-hydroxyethyl)-4-methylthiazole: step 1/1. Functionally, catalyzes the phosphorylation of the hydroxyl group of 4-methyl-5-beta-hydroxyethylthiazole (THZ). The chain is Hydroxyethylthiazole kinase 1 from Clostridium botulinum (strain Kyoto / Type A2).